The primary structure comprises 178 residues: Cytochrome b6-f complex iron-sulfur subunit (178 aa).

Residues 20 to 42 (LLTFGTVTGVALGALYPVAQYFT) form a helical membrane-spanning segment. Positions 71–161 (THPVGDRSLV…VSIEDDQVLV (91 aa)) constitute a Rieske domain. 4 residues coordinate [2Fe-2S] cluster: Cys-107, His-109, Cys-125, and His-128. Cys-112 and Cys-127 are joined by a disulfide.

The protein belongs to the Rieske iron-sulfur protein family. In terms of assembly, the 4 large subunits of the cytochrome b6-f complex are cytochrome b6, subunit IV (17 kDa polypeptide, PetD), cytochrome f and the Rieske protein, while the 4 small subunits are PetG, PetL, PetM and PetN. The complex functions as a dimer. Requires [2Fe-2S] cluster as cofactor.

It is found in the cellular thylakoid membrane. The catalysed reaction is 2 oxidized [plastocyanin] + a plastoquinol + 2 H(+)(in) = 2 reduced [plastocyanin] + a plastoquinone + 4 H(+)(out). Its function is as follows. Component of the cytochrome b6-f complex, which mediates electron transfer between photosystem II (PSII) and photosystem I (PSI), cyclic electron flow around PSI, and state transitions. This Prochlorococcus marinus (strain NATL1A) protein is Cytochrome b6-f complex iron-sulfur subunit.